The chain runs to 997 residues: Burkholderia TALE-like protein 2 (997 aa).

A Cryptic repeat -1 repeat occupies L19–V50. One copy of the Cryptic repeat 0 repeat lies at L51–G83. Core repeat repeat units follow at residues F84–G116, F117–G147, F148–G180, F181–G213, F214–G244, F245–G277, F278–G310, F311–G343, F344–G376, F377–G409, F410–G442, V443–G475, F476–G508, F509–G539, F540–G572, F573–G605, F606–G638, F639–G671, F672–G704, F705–G737, F738–D770, F771–G803, F804–G836, F837–G869, F870–G902, F903–D935, and L936–G967. The interval F84–G967 is buD domain. ANK repeat units follow at residues R772 to Q801, N805 to E834, N838 to Q867, and N871 to Q900. One copy of the Cryptic repeat +1 repeat lies at R968–Q997.

Belongs to the transcription activator-like effector (TALE) family. Bat subfamily.

Binds to DNA in a sequence-specific manner. The polypeptide is Burkholderia TALE-like protein 2 (Mycetohabitans rhizoxinica (strain DSM 19002 / CIP 109453 / HKI 454) (Paraburkholderia rhizoxinica)).